Consider the following 152-residue polypeptide: Transcriptional regulator MraZ (152 aa).

2 SpoVT-AbrB domains span residues 5-52 (ATMV…PLPE) and 81-124 (ASEC…DEQT).

The protein belongs to the MraZ family. Forms oligomers.

The protein localises to the cytoplasm. The protein resides in the nucleoid. In terms of biological role, negatively regulates its own expression and that of the subsequent genes in the proximal part of the division and cell wall (dcw) gene cluster. Acts by binding directly to DNA. May also regulate the expression of genes outside the dcw cluster. In Serratia proteamaculans (strain 568), this protein is Transcriptional regulator MraZ.